The primary structure comprises 394 residues: MTKPNHELSPALIVLMSIATGLAVASNYYAQPLLDTIARNFSLSASSAGFIVTAAQLGYAAGLLFLVPLGDMFERRRLIVSMTLLAAGGMLITASSQSLAMMILGTALTGLFSVVAQILVPLAATLASPDKRGKVVGTIMSGLLLGILLARTVAGLLANLGGWRTVFWVASVLMALMALALWRGLPQMKSETHLNYPQLLGSVFSMFISNKILRTRALLGCLTFANFSILWTSMAFLLAAPPFNYSDGVIGLFGLAGAAGALGARPAGGFADKGKSHHTTTFGLLLLLLSWLAIWFGHTSVLALIIGILVLDLTVQGVHITNQTVIYRIHPDARNRLTAGYMTSYFIGGAAGSLISASAWQHGGWAGVCLAGATIALVNLLVWWRGFHRQEAAN.

The next 11 helical transmembrane spans lie at 10–30 (PALIVLMSIATGLAVASNYYA), 50–70 (FIVTAAQLGYAAGLLFLVPLG), 79–99 (IVSMTLLAAGGMLITASSQSL), 100–120 (AMMILGTALTGLFSVVAQILV), 138–158 (TIMSGLLLGILLARTVAGLLA), 166–186 (VFWVASVLMALMALALWRGLP), 218–238 (LLGCLTFANFSILWTSMAFLL), 243–263 (FNYSDGVIGLFGLAGAAGALG), 291–311 (WLAIWFGHTSVLALIIGILVL), 337–357 (LTAGYMTSYFIGGAAGSLISA), and 364–384 (GWAGVCLAGATIALVNLLVWW).

The protein belongs to the major facilitator superfamily.

The protein resides in the cell inner membrane. This is an uncharacterized protein from Escherichia coli O157:H7.